The sequence spans 469 residues: Aspartyl/glutamyl-tRNA(Asn/Gln) amidotransferase subunit B (469 aa).

It belongs to the GatB/GatE family. GatB subfamily. Heterotrimer of A, B and C subunits.

The catalysed reaction is L-glutamyl-tRNA(Gln) + L-glutamine + ATP + H2O = L-glutaminyl-tRNA(Gln) + L-glutamate + ADP + phosphate + H(+). The enzyme catalyses L-aspartyl-tRNA(Asn) + L-glutamine + ATP + H2O = L-asparaginyl-tRNA(Asn) + L-glutamate + ADP + phosphate + 2 H(+). Allows the formation of correctly charged Asn-tRNA(Asn) or Gln-tRNA(Gln) through the transamidation of misacylated Asp-tRNA(Asn) or Glu-tRNA(Gln) in organisms which lack either or both of asparaginyl-tRNA or glutaminyl-tRNA synthetases. The reaction takes place in the presence of glutamine and ATP through an activated phospho-Asp-tRNA(Asn) or phospho-Glu-tRNA(Gln). The polypeptide is Aspartyl/glutamyl-tRNA(Asn/Gln) amidotransferase subunit B (Thermus thermophilus (strain ATCC BAA-163 / DSM 7039 / HB27)).